Consider the following 347-residue polypeptide: 3-isopropylmalate dehydrogenase (347 aa).

76-87 (GPKWTDPNNRPE) contributes to the NAD(+) binding site. The substrate site is built by Arg-94, Arg-104, Arg-132, and Asp-217. Mg(2+) contacts are provided by Asp-217, Asp-241, and Asp-245. 275–287 (GSAPDIANEDKAN) lines the NAD(+) pocket.

Belongs to the isocitrate and isopropylmalate dehydrogenases family. LeuB type 1 subfamily. As to quaternary structure, homodimer. Mg(2+) is required as a cofactor. It depends on Mn(2+) as a cofactor.

Its subcellular location is the cytoplasm. It carries out the reaction (2R,3S)-3-isopropylmalate + NAD(+) = 4-methyl-2-oxopentanoate + CO2 + NADH. It functions in the pathway amino-acid biosynthesis; L-leucine biosynthesis; L-leucine from 3-methyl-2-oxobutanoate: step 3/4. Its function is as follows. Catalyzes the oxidation of 3-carboxy-2-hydroxy-4-methylpentanoate (3-isopropylmalate) to 3-carboxy-4-methyl-2-oxopentanoate. The product decarboxylates to 4-methyl-2 oxopentanoate. The chain is 3-isopropylmalate dehydrogenase from Staphylococcus epidermidis (strain ATCC 35984 / DSM 28319 / BCRC 17069 / CCUG 31568 / BM 3577 / RP62A).